A 278-amino-acid polypeptide reads, in one-letter code: Protein D7 (278 aa).

CHHC U11-48K-type zinc fingers lie at residues 6–33 and 40–67; these read LMQC…RENN and LATC…EYRV. 8 residues coordinate Zn(2+): C9, H15, H25, C29, C43, H49, H59, and C63. Residues 149 to 164 show a composition bias toward polar residues; that stretch reads QVKQNQPEPEPFTSSE. Disordered regions lie at residues 149–230 and 249–278; these read QVKQ…PKAN and PGGS…WVRK. Over residues 165–175 the composition is skewed to basic and acidic residues; the sequence is RNYDPRSKEPP. A compositionally biased stretch (polar residues) spans 188 to 200; it reads ATTNTNPWCRQTG. The segment covering 214 to 225 has biased composition (basic and acidic residues); it reads SSDEGPRNKEFP.

Belongs to the UPF0224 (FAM112) family.

It is found in the cytoplasm. Involved in oocyte maturation. It is possible that D7 is required at a certain point in the maturation process and that maturation cannot proceed beyond this point unless a threshold amount of D7 protein is provided. This Xenopus laevis (African clawed frog) protein is Protein D7 (d7).